The following is a 231-amino-acid chain: Phosphatidylserine decarboxylase proenzyme (231 aa).

Residue serine 188 is the Schiff-base intermediate with substrate; via pyruvic acid of the active site. At serine 188 the chain carries Pyruvic acid (Ser); by autocatalysis.

This sequence belongs to the phosphatidylserine decarboxylase family. PSD-A subfamily. Heterodimer of a large membrane-associated beta subunit and a small pyruvoyl-containing alpha subunit. It depends on pyruvate as a cofactor. In terms of processing, is synthesized initially as an inactive proenzyme. Formation of the active enzyme involves a self-maturation process in which the active site pyruvoyl group is generated from an internal serine residue via an autocatalytic post-translational modification. Two non-identical subunits are generated from the proenzyme in this reaction, and the pyruvate is formed at the N-terminus of the alpha chain, which is derived from the carboxyl end of the proenzyme. The post-translation cleavage follows an unusual pathway, termed non-hydrolytic serinolysis, in which the side chain hydroxyl group of the serine supplies its oxygen atom to form the C-terminus of the beta chain, while the remainder of the serine residue undergoes an oxidative deamination to produce ammonia and the pyruvoyl prosthetic group on the alpha chain.

It localises to the cell membrane. It carries out the reaction a 1,2-diacyl-sn-glycero-3-phospho-L-serine + H(+) = a 1,2-diacyl-sn-glycero-3-phosphoethanolamine + CO2. The protein operates within phospholipid metabolism; phosphatidylethanolamine biosynthesis; phosphatidylethanolamine from CDP-diacylglycerol: step 2/2. Its function is as follows. Catalyzes the formation of phosphatidylethanolamine (PtdEtn) from phosphatidylserine (PtdSer). This Rickettsia bellii (strain OSU 85-389) protein is Phosphatidylserine decarboxylase proenzyme.